The sequence spans 84 residues: Acetylcholine receptor subunit alpha (84 aa).

2 disulfide bridges follow: cysteine 7/cysteine 21 and cysteine 71/cysteine 72. An N-linked (GlcNAc...) asparagine glycan is attached at asparagine 20.

Belongs to the ligand-gated ion channel (TC 1.A.9) family. Acetylcholine receptor (TC 1.A.9.1) subfamily. Alpha-1/CHRNA1 sub-subfamily. One of the alpha chains that assemble within the acetylcholine receptor, a pentamer of two alpha chains, a beta, a delta, and a gamma (in immature muscle) or epsilon (in mature muscle) chains. The muscle heteropentamer composed of alpha-1, beta-1, delta, epsilon subunits interacts with the alpha-conotoxin ImII.

The protein resides in the postsynaptic cell membrane. The protein localises to the cell membrane. It catalyses the reaction K(+)(in) = K(+)(out). The enzyme catalyses Na(+)(in) = Na(+)(out). Upon acetylcholine binding, the AChR responds by an extensive change in conformation that affects all subunits and leads to opening of an ion-conducting channel across the plasma membrane. This Crocidura russula (Greater white-toothed shrew) protein is Acetylcholine receptor subunit alpha (CHRNA1).